Here is a 299-residue protein sequence, read N- to C-terminus: Protein FAM228A (299 aa).

The disordered stretch occupies residues Ala-135–Ser-201. The segment covering Lys-146–Lys-159 has biased composition (basic and acidic residues). Ser-264 is modified (phosphoserine).

It belongs to the FAM228 family.

The protein is Protein FAM228A (Fam228a) of Mus musculus (Mouse).